Reading from the N-terminus, the 922-residue chain is Protein translocase subunit SecA (922 aa).

Residues Gln87, 105–109 (GEGKT), and Asp516 contribute to the ATP site. A disordered region spans residues 867-912 (YTAPTETGEPETLPDPRTAGAGGDGLNLPEGVRIGRNDPCPCGSGK). Cys906, Cys908, Cys917, and His918 together coordinate Zn(2+).

Belongs to the SecA family. In terms of assembly, monomer and homodimer. Part of the essential Sec protein translocation apparatus which comprises SecA, SecYEG and auxiliary proteins SecDF-YajC and YidC. Requires Zn(2+) as cofactor.

Its subcellular location is the cell inner membrane. It is found in the cytoplasm. The enzyme catalyses ATP + H2O + cellular proteinSide 1 = ADP + phosphate + cellular proteinSide 2.. In terms of biological role, part of the Sec protein translocase complex. Interacts with the SecYEG preprotein conducting channel. Has a central role in coupling the hydrolysis of ATP to the transfer of proteins into and across the cell membrane, serving both as a receptor for the preprotein-SecB complex and as an ATP-driven molecular motor driving the stepwise translocation of polypeptide chains across the membrane. The protein is Protein translocase subunit SecA of Paracidovorax citrulli (strain AAC00-1) (Acidovorax citrulli).